The following is a 935-amino-acid chain: C-1-tetrahydrofolate synthase, cytoplasmic (935 aa).

M1 carries the N-acetylmethionine modification. Residues 2–291 form a methylenetetrahydrofolate dehydrogenase and methenyltetrahydrofolate cyclohydrolase (D/C) domain region; sequence APAGILNGKV…MLMQSTVESA (290 aa). Substrate is bound by residues 52-56 and 99-101; these read YINVK and VQL. K56 is an active-site residue. NADP(+) is bound by residues 172-174 and S197; that span reads GRS. 272 to 276 is a substrate binding site; sequence PGGVG. The tract at residues 310–935 is formyltetrahydrofolate synthetase domain; the sequence is LNLKTPVPSD…PETEQVNGLF (626 aa). At S318 the chain carries Phosphoserine. Residue 380-387 participates in ATP binding; sequence TPLGEGKS. Phosphoserine is present on residues S413 and S490.

In the N-terminal section; belongs to the tetrahydrofolate dehydrogenase/cyclohydrolase family. The protein in the C-terminal section; belongs to the formate--tetrahydrofolate ligase family. In terms of assembly, homodimer.

The protein resides in the cytoplasm. It carries out the reaction (6R)-5,10-methylene-5,6,7,8-tetrahydrofolate + NADP(+) = (6R)-5,10-methenyltetrahydrofolate + NADPH. The catalysed reaction is (6R)-5,10-methenyltetrahydrofolate + H2O = (6R)-10-formyltetrahydrofolate + H(+). The enzyme catalyses (6S)-5,6,7,8-tetrahydrofolate + formate + ATP = (6R)-10-formyltetrahydrofolate + ADP + phosphate. Its pathway is one-carbon metabolism; tetrahydrofolate interconversion. Its function is as follows. Trifunctional enzyme that catalyzes the interconversion of three forms of one-carbon-substituted tetrahydrofolate: (6R)-5,10-methylene-5,6,7,8-tetrahydrofolate, 5,10-methenyltetrahydrofolate and (6S)-10-formyltetrahydrofolate. These derivatives of tetrahydrofolate are differentially required in nucleotide and amino acid biosynthesis, (6S)-10-formyltetrahydrofolate being required for purine biosynthesis while (6R)-5,10-methylene-5,6,7,8-tetrahydrofolate is used for serine and methionine biosynthesis for instance. This chain is C-1-tetrahydrofolate synthase, cytoplasmic (Mthfd1), found in Rattus norvegicus (Rat).